The chain runs to 299 residues: NAD(+) hydrolase PdTIR (299 aa).

One can recognise a TIR domain in the interval proline 164–isoleucine 297. NAD(+) is bound by residues alanine 173–tryptophan 174 and arginine 203. Residue glutamate 239 is part of the active site.

Homodimer. Interacts with host MYD88.

The enzyme catalyses NAD(+) + H2O = ADP-D-ribose + nicotinamide + H(+). Its function is as follows. NAD(+) hydrolase (NADase) that catalyzes cleavage of NAD(+) into ADP-D-ribose (ADPR) and nicotinamide. This Paracoccus denitrificans (strain Pd 1222) protein is NAD(+) hydrolase PdTIR.